Here is a 168-residue protein sequence, read N- to C-terminus: MFPARWHNYLQCGQVIKDSNLICFKTPLRPELFAYVTSEEDVWTAEQIVKQNPSIGAIIDLTNTSKYYDGVHFLRAGLLYKKIQVPGQTLPPESIVQEFIDTVKEFTEKCPGMLVGVHCTHGINRTGYMVCRYLMHTLGIAPQEAIDRFEKARGHKIERQNYVQDLLI.

A Tyrosine-protein phosphatase domain is found at 24–168 (FKTPLRPELF…RQNYVQDLLI (145 aa)). The active-site Phosphocysteine intermediate is the Cys119.

Belongs to the protein-tyrosine phosphatase family. Non-receptor class CDC14 subfamily.

It catalyses the reaction O-phospho-L-tyrosyl-[protein] + H2O = L-tyrosyl-[protein] + phosphate. Plays a role in the regulation and processing of late viral mRNAs by displaying RNA 5'-triphosphatase and diphosphatase activities. The protein is Tyrosine-protein phosphatase (PTP) of Autographa californica nuclear polyhedrosis virus (AcMNPV).